The primary structure comprises 334 residues: NADH dehydrogenase (ubiquinone) complex I, assembly factor 6 homolog (334 aa).

The transit peptide at Met1–Arg11 directs the protein to the mitochondrion.

This sequence belongs to the NDUFAF6 family. As to quaternary structure, associates with mitochondrial complex I assembly intermediates during its biogenesis. Forms a complex including sicily, ND-42 and Hsp83; the complex is necessary to chaperone ND-42 in the cytoplasm before mitochondrial import; the interaction between sicily and ND-42 is direct and occurs preferably between the unprocessed forms in the cytoplasm; the interaction with Hsp83 is direct. Interacts with ND-30; interaction is stronger between the unprocessed forms in the cytoplasm. Expressed in the ventral nerve cord, larval brain, motor neuron axons, imaginal disks, and muscles (at protein level).

The protein resides in the mitochondrion inner membrane. It is found in the cytoplasm. It localises to the cytosol. Involved in the assembly of mitochondrial NADH:ubiquinone oxidoreductase complex (Complex I) at early stages. Interacts with cytosolic Hsp90 to chaperone the Complex I subunit ND-42 in the cytoplasm. The protein is NADH dehydrogenase (ubiquinone) complex I, assembly factor 6 homolog of Drosophila melanogaster (Fruit fly).